A 581-amino-acid polypeptide reads, in one-letter code: Frizzled-8 (581 aa).

The signal sequence occupies residues 1–23; sequence MESLSLSLLLLVSWLQGSQCAAA. In terms of domain architecture, FZ spans 24–144; it reads KELSCQEITV…GNPDTLCMDY (121 aa). Residues 24–239 lie on the Extracellular side of the membrane; it reads KELSCQEITV…PEERTFTEFW (216 aa). Cystine bridges form between cysteine 28/cysteine 89, cysteine 36/cysteine 82, cysteine 73/cysteine 111, cysteine 100/cysteine 141, and cysteine 104/cysteine 128. The N-linked (GlcNAc...) asparagine glycan is linked to asparagine 42. Residue 64-71 coordinates hexadecanoate; sequence QFWPLVVI. The segment at 88–93 is wnt-binding; it reads ICLEDY. Residues 140 to 146 are wnt-binding; that stretch reads LCMDYYN. N-linked (GlcNAc...) asparagine glycosylation occurs at asparagine 146. Residues 151-189 are disordered; the sequence is TTAAPSHPEPPKPPARSVPKGRTRVEPPRSRSRATGCES. Positions 157-166 are enriched in pro residues; sequence HPEPPKPPAR. A helical membrane pass occupies residues 240 to 260; sequence IGLWSVLCFASTFATVSTFLI. Topologically, residues 261 to 271 are cytoplasmic; sequence DMERFKYPERP. The helical transmembrane segment at 272-292 threads the bilayer; the sequence is IIFLSACYLLVSTGYLIRLIA. Residues 293–320 are Extracellular-facing; it reads GHEKVACSRGELDLEHIIHYETTGPALC. The helical transmembrane segment at 321 to 341 threads the bilayer; it reads TLVFLLIYFFGMASSIWWVIL. At 342–377 the chain is on the cytoplasmic side; that stretch reads SLTWFLAAGMKWGNEAIAGYSQYFHLAAWLVPSIKS. A helical membrane pass occupies residues 378 to 398; the sequence is IAVLALSSVDGDPVAGICFVG. The Extracellular segment spans residues 399–407; it reads NQNLDNLRG. Residues 408 to 428 form a helical membrane-spanning segment; it reads FVLAPLVIYLFIGSMFLLAGF. The Cytoplasmic portion of the chain corresponds to 429-454; it reads VSLFRIRSVIKQGGTKTDKLEKLMIR. The helical transmembrane segment at 455–475 threads the bilayer; that stretch reads IGIFSVLYTVPATIVVACFFY. Residues 476 to 505 lie on the Extracellular side of the membrane; sequence EQHNRQGWEVAHNCNSCQPEMAQPHRPDYA. The helical transmembrane segment at 506–526 threads the bilayer; sequence VFMLKYFMCLVVGITSGVWIW. At 527–581 the chain is on the cytoplasmic side; sequence SGKTLESWRAFCTRCCWGSKATGGSMYSDVSTGLTWRSGTGSSVSCPKQMPLSQV. A Lys-Thr-X-X-X-Trp motif, mediates interaction with the PDZ domain of Dvl family members motif is present at residues 529–534; that stretch reads KTLESW. Residues 579–581 carry the PDZ-binding motif; that stretch reads SQV.

It belongs to the G-protein coupled receptor Fz/Smo family. As to quaternary structure, interacts with lypd6 and the interaction is strongly enhanced by wnt3a.

It localises to the membrane. It is found in the cell membrane. In terms of biological role, receptor for Wnt proteins. Most of frizzled receptors are coupled to the beta-catenin canonical signaling pathway, which leads to the activation of disheveled proteins, inhibition of GSK-3 kinase, nuclear accumulation of beta-catenin and activation of Wnt target genes. A second signaling pathway involving PKC and calcium fluxes has been seen for some family members, but it is not yet clear if it represents a distinct pathway or if it can be integrated in the canonical pathway, as PKC seems to be required for Wnt-mediated inactivation of GSK-3 kinase. Both pathways seem to involve interactions with G-proteins. May be involved in transduction and intercellular transmission of polarity information during tissue morphogenesis and/or in differentiated tissues. Activation by Wnt8, Wnt5A or Wnt3A induces expression of beta-catenin target genes. Displays an axis-inducing activity. The protein is Frizzled-8 (fzd8) of Xenopus laevis (African clawed frog).